A 124-amino-acid polypeptide reads, in one-letter code: uncharacterized protein (124 aa).

This is an uncharacterized protein from Haemophilus influenzae (strain ATCC 51907 / DSM 11121 / KW20 / Rd).